Here is an 859-residue protein sequence, read N- to C-terminus: Protein EFR3 homolog (859 aa).

Disordered stretches follow at residues 638-657 and 697-724; these read DDPL…TPRT and RDGN…PDGY. Basic and acidic residues predominate over residues 704 to 722; it reads WQREDGQNFDSTDGRESPD.

Belongs to the EFR3 family.

In Caenorhabditis briggsae, this protein is Protein EFR3 homolog.